Here is a 511-residue protein sequence, read N- to C-terminus: Sodium/proline symporter (511 aa).

The next 13 helical transmembrane spans lie at 16 to 36 (WQTY…AFTY), 53 to 73 (IGPY…WMIM), 84 to 104 (LSAM…YFVV), 138 to 158 (IISG…GFVS), 173 to 193 (FGLI…GYLA), 199 to 219 (FFQG…AMMN), 239 to 259 (LFKG…LGYF), 285 to 305 (ISWM…GIAF), 326 to 346 (VLFH…AIMS), 380 to 400 (FVMI…AIAW), 409 to 429 (LVGN…LFAL), 437 to 457 (AGAV…IAWI), and 466 to 486 (IFGL…TYVV).

This sequence belongs to the sodium:solute symporter (SSF) (TC 2.A.21) family.

Its subcellular location is the cell membrane. It catalyses the reaction L-proline(in) + Na(+)(in) = L-proline(out) + Na(+)(out). Its function is as follows. Catalyzes the sodium-dependent uptake of extracellular L-proline. Since most S.aureus strains are L-proline auxotrophs, this transporter may aid the bacterial persistence during an infection of tissues with low proline concentrations. In Staphylococcus aureus, this protein is Sodium/proline symporter.